Reading from the N-terminus, the 343-residue chain is Lumican (343 aa).

Positions 1 to 18 (MTLNSLPIFLVLISGIFC) are cleaved as a signal peptide. Gln-19 carries the pyrrolidone carboxylic acid modification. 2 positions are modified to sulfotyrosine: Tyr-20 and Tyr-22. Positions 31-69 (DPFGPSTAVCAPECNCPLSYPTAMYCDNLKLKTIPIVPS) constitute an LRRNT domain. 8 LRR repeats span residues 70–91 (GIKY…TFDN), 94–117 (DLQW…VFSK), 120–140 (NLKK…PLPK), 141–162 (TLDD…ALEG), 165–186 (NLTV…GAFK), 190–211 (SLLY…LPHS), 212–232 (LLML…YFQG), and 235–255 (TLQY…PGNV). N-linked (GlcNAc...) (keratan sulfate) asparagine glycosylation is present at Asn-91. A glycan (N-linked (GlcNAc...) (keratan sulfate) asparagine) is linked at Asn-130. An N-linked (GlcNAc...) (keratan sulfate) asparagine glycan is attached at Asn-165. Residue Asn-257 is glycosylated (N-linked (GlcNAc...) (keratan sulfate) asparagine). LRR repeat units follow at residues 260-281 (SLVE…SENL), 282-301 (ENFY…SFCK), and 310-330 (KITH…PQEM). Cys-300 and Cys-333 form a disulfide bridge. Asn-320 carries N-linked (GlcNAc...) asparagine glycosylation.

It belongs to the small leucine-rich proteoglycan (SLRP) family. SLRP class II subfamily. As to quaternary structure, binds to laminin. Post-translationally, contains keratan sulfate. In terms of tissue distribution, cornea and other tissues.

The protein resides in the secreted. It is found in the extracellular space. Its subcellular location is the extracellular matrix. In Gallus gallus (Chicken), this protein is Lumican (LUM).